Here is a 558-residue protein sequence, read N- to C-terminus: Hsp70-Hsp90 organizing protein 3 (558 aa).

TPR repeat units follow at residues 2–35, 37–69, 70–103, and 136–173; these read AEEAKSKGNAAFSSGDYATAITHFTEAINLSPTN, ILYSNRSASYASLHRYEEALSDAKKTIELKPDW, SKGYSRLGAAFIGLSKFDEAVDSYKKGLEIDPSN, and EKLTADPGTRVYLEQDDFVKTMKEIQRNPNNLNLYMKD. Residues 131–170 form the STI1 1 domain; the sequence is GKEMWEKLTADPGTRVYLEQDDFVKTMKEIQRNPNNLNLY. The interval 191-232 is disordered; it reads SSGEDTEMKEADERKEPEPEMEPMELTEEERQKKERKEKALK. The segment covering 196–208 has biased composition (basic and acidic residues); that stretch reads TEMKEADERKEPE. A compositionally biased stretch (acidic residues) spans 209-218; that stretch reads PEMEPMELTE. Residues 219-232 show a composition bias toward basic and acidic residues; sequence EERQKKERKEKALK. Positions 227–244 match the Bipartite nuclear localization signal motif; that stretch reads KEKALKEKGEGNVAYKKK. TPR repeat units lie at residues 230–263, 265–297, 305–342, 369–402, 404–436, and 437–470; these read ALKEKGEGNVAYKKKDFGRAVEHYTKAMELDDED, SYLTNRAAVYLEMGKYEECIEDCDKAVERGREL, ARALTRKGSALVKMARCSKDFEPAIETFQKALTEHRNP, AEEEREKGNGFFKEQKYPEAVKHYSEAIKRNPND, RAYSNRAACYTKLGALPEGLKDAEKCIELDPSF, and TKGYSRKGAIQFFMKEYDKAMETYQEGLKHDPKN. Residues 507-546 form the STI1 2 domain; sequence DPEVQNILSDPVMRQVLVDFQENPKAAQEHMKNPMVMNKI.

In terms of assembly, co-chaperone that forms a complex with HSP70 and HSP90 and preproteins (e.g. chloroplast preproteins). Phosphorylated. Post-translationally, acetylated.

It localises to the cytoplasm. Its subcellular location is the nucleus. Mediates the association of the molecular chaperones HSP70 and HSP90. Mediates nuclear encoded chloroplast preproteins binding to HSP90 prior to chloroplastic sorting. Involved in acclimation to heat. This Arabidopsis thaliana (Mouse-ear cress) protein is Hsp70-Hsp90 organizing protein 3 (HOP3).